Reading from the N-terminus, the 123-residue chain is ATP synthase epsilon chain (123 aa).

It belongs to the ATPase epsilon chain family. As to quaternary structure, F-type ATPases have 2 components, CF(1) - the catalytic core - and CF(0) - the membrane proton channel. CF(1) has five subunits: alpha(3), beta(3), gamma(1), delta(1), epsilon(1). CF(0) has three main subunits: a, b and c.

The protein resides in the cell inner membrane. Its function is as follows. Produces ATP from ADP in the presence of a proton gradient across the membrane. In Helicobacter pylori (strain G27), this protein is ATP synthase epsilon chain.